The sequence spans 171 residues: 3-hydroxydecanoyl-[acyl-carrier-protein] dehydratase (171 aa).

Histidine 70 is a catalytic residue.

Belongs to the thioester dehydratase family. FabA subfamily. As to quaternary structure, homodimer.

The protein localises to the cytoplasm. The enzyme catalyses a (3R)-hydroxyacyl-[ACP] = a (2E)-enoyl-[ACP] + H2O. It catalyses the reaction (3R)-hydroxydecanoyl-[ACP] = (2E)-decenoyl-[ACP] + H2O. It carries out the reaction (2E)-decenoyl-[ACP] = (3Z)-decenoyl-[ACP]. Its pathway is lipid metabolism; fatty acid biosynthesis. Functionally, necessary for the introduction of cis unsaturation into fatty acids. Catalyzes the dehydration of (3R)-3-hydroxydecanoyl-ACP to E-(2)-decenoyl-ACP and then its isomerization to Z-(3)-decenoyl-ACP. Can catalyze the dehydratase reaction for beta-hydroxyacyl-ACPs with saturated chain lengths up to 16:0, being most active on intermediate chain length. The protein is 3-hydroxydecanoyl-[acyl-carrier-protein] dehydratase of Pseudomonas aeruginosa (strain LESB58).